Here is a 388-residue protein sequence, read N- to C-terminus: Single-stranded DNA-binding protein 3 (388 aa).

The residue at position 1 (M1) is an N-acetylmethionine. The LisH domain maps to A16–K48. The interval V101 to V388 is disordered. Over residues G126–N139 the composition is skewed to pro residues. An asymmetric dimethylarginine mark is found at R155, R161, and R165. 2 stretches are compositionally biased toward low complexity: residues M200–M209 and P250–G268. Residues G272–P282 are compositionally biased toward pro residues. The span at A285–T296 shows a compositional bias: polar residues. The span at G315 to G325 shows a compositional bias: gly residues. Over residues N346–P357 the composition is skewed to low complexity. Residues S347, S352, and S355 each carry the phosphoserine modification. T360 is modified (phosphothreonine). Positions H373–V388 are enriched in polar residues. Residues S381 and S387 each carry the phosphoserine modification.

In terms of tissue distribution, highly expressed in all hematopoietic tissues, including spleen, lymph node, peripheral blood, bone marrow, thymus, and fetal liver, with highest expression in thymus and fetal liver. Expression is also high in heart, brain, kidney, and skeletal muscle.

The protein resides in the nucleus. In terms of biological role, may be involved in transcription regulation of the alpha 2(I) collagen gene where it binds to the single-stranded polypyrimidine sequences in the promoter region. The protein is Single-stranded DNA-binding protein 3 (SSBP3) of Homo sapiens (Human).